We begin with the raw amino-acid sequence, 343 residues long: Ferredoxin--NADP reductase (343 aa).

Residues Asp36, Gln44, Tyr49, Val89, Phe124, Asp289, and Thr330 each contribute to the FAD site.

Belongs to the ferredoxin--NADP reductase type 2 family. As to quaternary structure, homodimer. It depends on FAD as a cofactor.

It carries out the reaction 2 reduced [2Fe-2S]-[ferredoxin] + NADP(+) + H(+) = 2 oxidized [2Fe-2S]-[ferredoxin] + NADPH. The protein is Ferredoxin--NADP reductase of Mesorhizobium japonicum (strain LMG 29417 / CECT 9101 / MAFF 303099) (Mesorhizobium loti (strain MAFF 303099)).